We begin with the raw amino-acid sequence, 446 residues long: Exopolygalacturonase (446 aa).

Positions 1-17 (MRVTDIISCALLQASIA) are cleaved as a signal peptide. Asn-53, Asn-118, Asn-134, and Asn-204 each carry an N-linked (GlcNAc...) asparagine glycan. The PbH1 1 repeat unit spans residues 236–257 (SDNIIIQNSNINNGDDCVSFKP). Asp-250 serves as the catalytic Proton donor. An intrachain disulfide couples Cys-252 to Cys-269. N-linked (GlcNAc...) asparagine glycans are attached at residues Asn-258 and Asn-270. 3 PbH1 repeats span residues 259 to 279 (STNI…SVGS), 290 to 311 (VENI…RIKV), and 332 to 353 (VRNV…EITQ). His-273 is an active-site residue. N-linked (GlcNAc...) asparagine glycosylation is found at Asn-297, Asn-302, Asn-334, Asn-359, and Asn-369. PbH1 repeat units follow at residues 367–398 (PSNL…VVCS) and 403–434 (CSDI…QSQV). Cystine bridges form between Cys-397–Cys-403 and Cys-424–Cys-436. Asn-435 carries an N-linked (GlcNAc...) asparagine glycan.

This sequence belongs to the glycosyl hydrolase 28 family.

The protein localises to the secreted. It carries out the reaction [(1-&gt;4)-alpha-D-galacturonosyl](n) + H2O = alpha-D-galacturonate + [(1-&gt;4)-alpha-D-galacturonosyl](n-1). Functionally, hydrolysis of 1,4-alpha-D-galactosiduronic linkages in pectate and other galacturonans. The chain is Exopolygalacturonase (PGX1) from Cochliobolus carbonum (Maize leaf spot fungus).